The sequence spans 353 residues: Protein MGF 360-11L (353 aa).

The stretch at 59–88 is one ANK repeat; sequence ELNTVLMKAAKENNHDLIRLFVEWGADINY.

This sequence belongs to the asfivirus MGF 360 family. In terms of assembly, interacts with host TBK1 ad IRF7.

Functionally, plays a role in virus cell tropism, and may be required for efficient virus replication in macrophages. In addition, inhibits the phosphorylation of host TBK1 and IRF7 and thereby negatively regulates the host cGAS signaling pathway and antagonizes IFN-mediated antiviral activity. This African swine fever virus (isolate Pig/Kenya/KEN-50/1950) (ASFV) protein is Protein MGF 360-11L.